An 86-amino-acid chain; its full sequence is uncharacterized protein (86 aa).

Residues 63–85 form a helical membrane-spanning segment; the sequence is VGGRSPSIQNSFFFFFFFFFFFF.

The protein localises to the membrane. This is an uncharacterized protein from Dictyostelium discoideum (Social amoeba).